The primary structure comprises 77 residues: Acyl carrier protein (77 aa).

Residues 1-76 (MENFDKVKDI…DAVKFINSIE (76 aa)) enclose the Carrier domain. Residue Ser-36 is modified to O-(pantetheine 4'-phosphoryl)serine.

Belongs to the acyl carrier protein (ACP) family. 4'-phosphopantetheine is transferred from CoA to a specific serine of apo-ACP by AcpS. This modification is essential for activity because fatty acids are bound in thioester linkage to the sulfhydryl of the prosthetic group.

It is found in the cytoplasm. The protein operates within lipid metabolism; fatty acid biosynthesis. Its function is as follows. Carrier of the growing fatty acid chain in fatty acid biosynthesis. The protein is Acyl carrier protein of Staphylococcus saprophyticus subsp. saprophyticus (strain ATCC 15305 / DSM 20229 / NCIMB 8711 / NCTC 7292 / S-41).